A 264-amino-acid polypeptide reads, in one-letter code: Thymidylate synthase (264 aa).

Residue Arg-21 participates in dUMP binding. His-51 serves as a coordination point for (6R)-5,10-methylene-5,6,7,8-tetrahydrofolate. 126-127 (RR) lines the dUMP pocket. The active-site Nucleophile is the Cys-146. Residues 166–169 (RSCD), Asn-177, and 207–209 (HLY) contribute to the dUMP site. Asp-169 contributes to the (6R)-5,10-methylene-5,6,7,8-tetrahydrofolate binding site. Residue Ser-263 coordinates (6R)-5,10-methylene-5,6,7,8-tetrahydrofolate.

Belongs to the thymidylate synthase family. Bacterial-type ThyA subfamily. In terms of assembly, homodimer.

It localises to the cytoplasm. The enzyme catalyses dUMP + (6R)-5,10-methylene-5,6,7,8-tetrahydrofolate = 7,8-dihydrofolate + dTMP. It participates in pyrimidine metabolism; dTTP biosynthesis. In terms of biological role, catalyzes the reductive methylation of 2'-deoxyuridine-5'-monophosphate (dUMP) to 2'-deoxythymidine-5'-monophosphate (dTMP) while utilizing 5,10-methylenetetrahydrofolate (mTHF) as the methyl donor and reductant in the reaction, yielding dihydrofolate (DHF) as a by-product. This enzymatic reaction provides an intracellular de novo source of dTMP, an essential precursor for DNA biosynthesis. This chain is Thymidylate synthase, found in Buchnera aphidicola subsp. Schizaphis graminum (strain Sg).